The sequence spans 312 residues: tRNA-dihydrouridine(16) synthase (312 aa).

FMN-binding positions include 7 to 9 and glutamine 68; that span reads PME. Catalysis depends on cysteine 98, which acts as the Proton donor. FMN is bound by residues lysine 139, 200 to 202, and 224 to 225; these read NGE and GR.

The protein belongs to the Dus family. DusC subfamily. The cofactor is FMN.

It catalyses the reaction 5,6-dihydrouridine(16) in tRNA + NADP(+) = uridine(16) in tRNA + NADPH + H(+). The catalysed reaction is 5,6-dihydrouridine(16) in tRNA + NAD(+) = uridine(16) in tRNA + NADH + H(+). Its function is as follows. Catalyzes the synthesis of 5,6-dihydrouridine (D), a modified base found in the D-loop of most tRNAs, via the reduction of the C5-C6 double bond in target uridines. Specifically modifies U16 in tRNAs. The protein is tRNA-dihydrouridine(16) synthase of Yersinia pestis.